Consider the following 180-residue polypeptide: MDNHGILESLLFTAGDEGLDEKQLLEILDMSKNQLVELIENYSSHGLMIQRFGTTYVLTTKKEAATYIEQLIEQKSQMKLSQAAMEVLSIIAYNQPLSRSDIELIRSINSDGAVKTLIAKGLVEAKVVNEQRSQQLITTDLFLNVFGISNIEDLPTTEEDDEEMDAFFSNLVNQKGENND.

Belongs to the ScpB family. Homodimer. Homodimerization may be required to stabilize the binding of ScpA to the Smc head domains. Component of a cohesin-like complex composed of ScpA, ScpB and the Smc homodimer, in which ScpA and ScpB bind to the head domain of Smc. The presence of the three proteins is required for the association of the complex with DNA.

It localises to the cytoplasm. Participates in chromosomal partition during cell division. May act via the formation of a condensin-like complex containing Smc and ScpA that pull DNA away from mid-cell into both cell halves. The protein is Segregation and condensation protein B of Staphylococcus aureus (strain MSSA476).